Reading from the N-terminus, the 318-residue chain is Protein phosphatase 1 regulatory subunit 3C (318 aa).

The short motif at 84–87 (RVVF) is the PP1-binding motif element. The tract at residues 141–263 (PSADYLSFRN…YRIVHVQWKP (123 aa)) is interaction with EPM2A. The region spanning 149–257 (RNHFQKNSVC…NNEGQNYRIV (109 aa)) is the CBM21 domain.

In terms of assembly, interacts with PPP1CC catalytic subunit of PP1 and associates with glycogen. Forms complexes with glycogen phosphorylase, glycogen synthase and phosphorylase kinase which is necessary for its regulation of PP1 activity. Also interacts with EPM2A/laforin. Ubiquitinated by NHLRC1/malin in a EPM2A/laforin-dependent manner.

Its function is as follows. Acts as a glycogen-targeting subunit for PP1 and regulates its activity. Activates glycogen synthase, reduces glycogen phosphorylase activity and limits glycogen breakdown. Dramatically increases basal and insulin-stimulated glycogen synthesis upon overexpression in a variety of cell types. The protein is Protein phosphatase 1 regulatory subunit 3C of Bos taurus (Bovine).